The primary structure comprises 224 residues: Ribosomal RNA small subunit methyltransferase G (224 aa).

Residues G92, L97, 143 to 144 (VE), and R156 each bind S-adenosyl-L-methionine.

Belongs to the methyltransferase superfamily. RNA methyltransferase RsmG family.

It is found in the cytoplasm. The enzyme catalyses guanosine(527) in 16S rRNA + S-adenosyl-L-methionine = N(7)-methylguanosine(527) in 16S rRNA + S-adenosyl-L-homocysteine. Its function is as follows. Specifically methylates the N7 position of guanine in position 527 of 16S rRNA. The polypeptide is Ribosomal RNA small subunit methyltransferase G (Albidiferax ferrireducens (strain ATCC BAA-621 / DSM 15236 / T118) (Rhodoferax ferrireducens)).